The chain runs to 511 residues: Histidine ammonia-lyase (511 aa).

Positions 142–144 (ASG) form a cross-link, 5-imidazolinone (Ala-Gly). S143 is subject to 2,3-didehydroalanine (Ser).

This sequence belongs to the PAL/histidase family. In terms of processing, contains an active site 4-methylidene-imidazol-5-one (MIO), which is formed autocatalytically by cyclization and dehydration of residues Ala-Ser-Gly.

The protein localises to the cytoplasm. The catalysed reaction is L-histidine = trans-urocanate + NH4(+). It functions in the pathway amino-acid degradation; L-histidine degradation into L-glutamate; N-formimidoyl-L-glutamate from L-histidine: step 1/3. The protein is Histidine ammonia-lyase of Brucella suis biovar 1 (strain 1330).